Consider the following 294-residue polypeptide: 4-hydroxy-tetrahydrodipicolinate synthase (294 aa).

Threonine 45 contributes to the pyruvate binding site. Tyrosine 133 (proton donor/acceptor) is an active-site residue. Lysine 162 (schiff-base intermediate with substrate) is an active-site residue. Isoleucine 204 contacts pyruvate.

It belongs to the DapA family. As to quaternary structure, homotetramer; dimer of dimers.

The protein localises to the cytoplasm. It carries out the reaction L-aspartate 4-semialdehyde + pyruvate = (2S,4S)-4-hydroxy-2,3,4,5-tetrahydrodipicolinate + H2O + H(+). It participates in amino-acid biosynthesis; L-lysine biosynthesis via DAP pathway; (S)-tetrahydrodipicolinate from L-aspartate: step 3/4. Functionally, catalyzes the condensation of (S)-aspartate-beta-semialdehyde [(S)-ASA] and pyruvate to 4-hydroxy-tetrahydrodipicolinate (HTPA). The polypeptide is 4-hydroxy-tetrahydrodipicolinate synthase (Rhizobium meliloti (strain 1021) (Ensifer meliloti)).